Reading from the N-terminus, the 301-residue chain is Small ribosomal subunit protein uS2 (301 aa).

Residues 237 to 301 are disordered; the sequence is PTESWNDTVV…QDWSNSTSQW (65 aa). Low complexity predominate over residues 264-278; sequence PQYAPAPQAAAAPVA.

The protein belongs to the universal ribosomal protein uS2 family. As to quaternary structure, component of the small ribosomal subunit. Mature ribosomes consist of a small (40S) and a large (60S) subunit. The 40S subunit contains about 33 different proteins and 1 molecule of RNA (18S). The 60S subunit contains about 49 different proteins and 3 molecules of RNA (28S, 5.8S and 5S). Interacts with ribosomal protein S21.

It is found in the cytoplasm. In terms of biological role, required for the assembly and/or stability of the 40S ribosomal subunit. Required for the processing of the 20S rRNA-precursor to mature 18S rRNA in a late step of the maturation of 40S ribosomal subunits. In Diaphorina citri (Asian citrus psyllid), this protein is Small ribosomal subunit protein uS2.